We begin with the raw amino-acid sequence, 1191 residues long: DNA-directed RNA polymerase subunit beta (1191 aa).

The interval 1164–1191 (EEEDLQPADALNIAPQPDTEEEPVESFE) is disordered. Residues 1181-1191 (DTEEEPVESFE) show a composition bias toward acidic residues.

It belongs to the RNA polymerase beta chain family. In terms of assembly, the RNAP catalytic core consists of 2 alpha, 1 beta, 1 beta' and 1 omega subunit. When a sigma factor is associated with the core the holoenzyme is formed, which can initiate transcription.

It catalyses the reaction RNA(n) + a ribonucleoside 5'-triphosphate = RNA(n+1) + diphosphate. DNA-dependent RNA polymerase catalyzes the transcription of DNA into RNA using the four ribonucleoside triphosphates as substrates. This is DNA-directed RNA polymerase subunit beta from Lysinibacillus sphaericus (strain C3-41).